A 710-amino-acid chain; its full sequence is Lactotransferrin (710 aa).

Residues 1 to 19 (MKLVFLVLLFLGALGLCLA) form the signal peptide. Residue Phe-10 is modified to Phosphoserine; alternate. Residue Phe-10 is glycosylated (O-linked (GlcNAc) serine; alternate). Residues 20–24 (GRRRS) form a critical for glycosaminoglycan, lipid A, lysozyme and DNA binding region. Bactericidal and antifungal activity regions lie at residues 20-29 (GRRRSVQWCA) and 39-49 (FQWQRNMRKVR). The segment at 21–22 (RR) is important for full bactericidal and antifungal activities. Transferrin-like domains lie at 25–352 (VQWC…NLRK) and 364–695 (VVWC…NLKK). Cystine bridges form between Cys-28/Cys-64 and Cys-38/Cys-55. Interaction with PspA regions lie at residues 39–46 (FQWQRNMR) and 57–58 (KR). The segment at 39–49 (FQWQRNMRKVR) is interaction with lipopolysaccharide. Residues 46–51 (RKVRGP) form an involved in glycosaminoglycan binding region. Asp-79 is a Fe(3+) binding site. Residue Lys-92 is part of the active site. Tyr-111 contributes to the Fe(3+) binding site. Intrachain disulfides connect Cys-134/Cys-217, Cys-176/Cys-192, Cys-189/Cys-200, and Cys-250/Cys-264. Hydrogencarbonate-binding residues include Thr-136, Arg-140, Ala-142, and Gly-143. The N-linked (GlcNAc...) asparagine glycan is linked to Asn-156. Tyr-211 serves as a coordination point for Fe(3+). Residue His-272 participates in Fe(3+) binding. Residue Ser-278 is the Nucleophile of the active site. Disulfide bonds link Cys-367–Cys-399 and Cys-377–Cys-390. Glycyl lysine isopeptide (Lys-Gly) (interchain with G-Cter in ubiquitin) cross-links involve residues Gln-379 and Ser-391. Residues Asp-414 and Tyr-454 each coordinate Fe(3+). Cystine bridges form between Cys-424–Cys-705, Cys-446–Cys-668, Cys-478–Cys-553, Cys-502–Cys-696, Cys-512–Cys-526, Cys-523–Cys-536, Cys-594–Cys-608, and Cys-646–Cys-651. 4 residues coordinate hydrogencarbonate: Thr-480, Arg-484, Ala-486, and Gly-487. N-linked (GlcNAc...) asparagine glycosylation occurs at Asn-497. Position 547 (Tyr-547) interacts with Fe(3+). A Fe(3+)-binding site is contributed by His-616. Asn-642 carries N-linked (GlcNAc...) asparagine glycosylation.

This sequence belongs to the transferrin family. Monomer. Found in a complex with LTF, CLU, EPPIN and SEMG1. Found in a complex with MPO and LTF; interacts directly with CP, allows Fe(3+) incorporation into LTF and activation of CP ferroxidase activity. Phosphorylation at Ser-10 activates the transcriptional activity. Phosphorylation at Ser-10 also promotes proteasomal degradation. Alternatively can undergo O-GlcNAcylation at Ser-10. Post-translationally, O-GlcNAcylation at Ser-10 inhibits DNA binding and negatively regulates the transcriptional activity. Alternatively can undergo phosphorylation at Ser-10. In terms of processing, poly-N-acetyllactosaminic carbohydrate moiety seems to be needed for TLR4 activation. As to expression, high levels are found in saliva and tears, intermediate levels in serum and plasma, and low levels in urine. In kidney, detected in the distal collecting tubules in the medulla but not in the cortical region or in blood vessels. Detected in peripheral blood neutrophils (at protein level). Isoform 1 and isoform DeltaLf are expressed in breast, prostate, spleen, pancreas, kidney, small intestine, lung, skeletal muscle, uterus, thymus and fetal liver. Isoform 1 is expressed in brain, testis and peripheral blood leukocytes; isoform DeltaLf is barely detectable in these tissues. Isoform DeltaLf is expressed in placenta, liver and ovary; isoform 1 is barely detectable in these tissues. In kidney, isoform 1 is expressed at high levels in the collecting tubules of the medulla but at very low levels in the cortex.

The protein resides in the secreted. It is found in the cytoplasmic granule. Its subcellular location is the cytoplasm. The protein localises to the nucleus. In terms of biological role, transferrins are iron binding transport proteins which can bind two Fe(3+) ions in association with the binding of an anion, usually bicarbonate. Major iron-binding and multifunctional protein found in exocrine fluids such as breast milk and mucosal secretions. Has antimicrobial activity, which depends on the extracellular cation concentration. Antimicrobial properties include bacteriostasis, which is related to its ability to sequester free iron and thus inhibit microbial growth, as well as direct bactericidal properties leading to the release of lipopolysaccharides from the bacterial outer membrane. Can also prevent bacterial biofilm development in P.aeruginosa infection. Has weak antifungal activity against C.albicans. Has anabolic, differentiating and anti-apoptotic effects on osteoblasts and can also inhibit osteoclastogenesis, possibly playing a role in the regulation of bone growth. Promotes binding of species C adenoviruses to epithelial cells, promoting adenovirus infection. Can inhibit papillomavirus infections. Stimulates the TLR4 signaling pathway leading to NF-kappa-B activation and subsequent pro-inflammatory cytokine production while also interfering with the lipopolysaccharide (LPS)-stimulated TLR4 signaling. Inhibits neutrophil granulocyte migration to sites of apoptosis, when secreted by apoptotic cells. Stimulates VEGFA-mediated endothelial cell migration and proliferation. Binds heparin, chondroitin sulfate and possibly other glycosaminoglycans (GAGs). Also binds specifically to pneumococcal surface protein A (PspA), the lipid A portion of bacterial lipopolysaccharide (LPS), lysozyme and DNA. Its function is as follows. Lactoferricin binds to the bacterial surface and is crucial for the bactericidal functions. Has some antiviral activity against papillomavirus infection. N-terminal region shows strong antifungal activity against C.albicans. Contains two BBXB heparin-binding consensus sequences that appear to form the predominate functional GAG-binding site. Functionally, has antimicrobial activity and is able to permeabilize different ions through liposomal membranes. In terms of biological role, has opioid antagonist activity. Shows preference for mu-receptor. Has opioid antagonist activity. Shows higher degrees of preference for kappa-receptors than for mu-receptors. Its function is as follows. The lactotransferrin transferrin-like domain 1 functions as a serine protease of the peptidase S60 family that cuts arginine rich regions. This function contributes to the antimicrobial activity. Shows a preferential cleavage at -Arg-Ser-Arg-Arg-|- and -Arg-Arg-Ser-Arg-|-, and of Z-Phe-Arg-|-aminomethylcoumarin sites. Functionally, transcription factor with antiproliferative properties and ability to induce cell cycle arrest. Binds to the DeltaLf response element found in the SKP1, BAX, DCPS, and SELENOH promoters. In Homo sapiens (Human), this protein is Lactotransferrin.